Reading from the N-terminus, the 245-residue chain is Polyhedrin (245 aa).

This sequence belongs to the polyhedrin family.

In terms of biological role, major component of the virus occlusion bodies, which are large proteinaceous structures (polyhedra), that protect the virus from the outside environment for extended periods until they are ingested by insect larvae. This is Polyhedrin (PH) from Bombyx mori nuclear polyhedrosis virus (BmNPV).